The primary structure comprises 159 residues: Ribosomal RNA large subunit methyltransferase H (159 aa).

S-adenosyl-L-methionine contacts are provided by residues leucine 76, glycine 108, and 127-132; that span reads FSKMTL.

The protein belongs to the RNA methyltransferase RlmH family. In terms of assembly, homodimer.

The protein localises to the cytoplasm. The catalysed reaction is pseudouridine(1915) in 23S rRNA + S-adenosyl-L-methionine = N(3)-methylpseudouridine(1915) in 23S rRNA + S-adenosyl-L-homocysteine + H(+). Its function is as follows. Specifically methylates the pseudouridine at position 1915 (m3Psi1915) in 23S rRNA. This Bacillus cytotoxicus (strain DSM 22905 / CIP 110041 / 391-98 / NVH 391-98) protein is Ribosomal RNA large subunit methyltransferase H.